The primary structure comprises 232 residues: BTB/POZ domain-containing protein KCTD11 (232 aa).

Residues 1 to 49 (MLGAMFRAGTPMTPNLNPEGGGHYFIDRDGKAFRHILNFLRLGRLDLPL) enclose the BTB domain.

In terms of assembly, homopentamer. Interacts with KCTD6 and KCTD21; KCTD11 and KCTD6 or KCTD21 may associate in pentameric assemblies. Component of the BCR(KCTD11) E3 ubiquitin ligase complex, at least composed of CUL3 and KCTD11 and RBX1. Interacts (via BTB domain) with CUL3; initially a 4:4 stoichiometry has been reported, however, electron microscopy revealed pentameric states of the BTB domain.

It functions in the pathway protein modification; protein ubiquitination. Its function is as follows. Plays a role as a marker and a regulator of neuronal differentiation; Up-regulated by a variety of neurogenic signals, such as retinoic acid, epidermal growth factor/EGF and NGFB/nerve growth factor. Induces apoptosis, growth arrest and the expression of cyclin-dependent kinase inhibitor CDKN1B. Plays a role as a tumor repressor and inhibits cell growth and tumorigenicity of medulloblastoma (MDB). Acts as a probable substrate-specific adapter for a BCR (BTB-CUL3-RBX1) E3 ubiquitin-protein ligase complex towards HDAC1. Functions as antagonist of the Hedgehog pathway on cell proliferation and differentiation by affecting the nuclear transfer of transcription factor GLI1, thus maintaining cerebellar granule cells in undifferentiated state, this effect probably occurs via HDAC1 down-regulation, keeping GLI1 acetylated and inactive. This is BTB/POZ domain-containing protein KCTD11 (KCTD11) from Bos taurus (Bovine).